The sequence spans 466 residues: MIPVTSFAGKTVAVFGLGGSGLASCHALKAGGAEVIAADDNAENVAKAAQAGFITADLRDVSWAGFAALVLAPGVPLTHPVPHWSVLKAREAGVEVIGDIELFCRERRRHAPDAPFVAITGTNGKSTTTALIAHLTKVAGYDTQMGGNIGTAILSLEPPRTGRVHVIEMSSYQIDLTPSLDPSVGILLNVSEDHIDRHGTIAHYAAVKERLVAGVQAGGTSIVGVDDGYCRDIADRLDRAGKNVVRISVKNPLASGIHVEHGTIVRTAGGARSEVAKLGGIGSLRGLHNAQNAACAAAAALAMGISQDVLQDGLRSFPGLAHRMEQVGRRGNVLFVNDSKGTNADATAHALSSFADIFWIAGGKPKAGGITSLTGFFPRIRKAYLIGEAAQEFSGTLGTQVAHEISQTLDVAVEHAARDAEASGLTDAVVLLSPACASFDQYRNFEIRGTKFRELVQALPGVKPVV.

Gly121–Thr127 contributes to the ATP binding site.

This sequence belongs to the MurCDEF family.

The protein localises to the cytoplasm. It carries out the reaction UDP-N-acetyl-alpha-D-muramoyl-L-alanine + D-glutamate + ATP = UDP-N-acetyl-alpha-D-muramoyl-L-alanyl-D-glutamate + ADP + phosphate + H(+). It participates in cell wall biogenesis; peptidoglycan biosynthesis. Cell wall formation. Catalyzes the addition of glutamate to the nucleotide precursor UDP-N-acetylmuramoyl-L-alanine (UMA). This Bradyrhizobium diazoefficiens (strain JCM 10833 / BCRC 13528 / IAM 13628 / NBRC 14792 / USDA 110) protein is UDP-N-acetylmuramoylalanine--D-glutamate ligase.